Reading from the N-terminus, the 122-residue chain is Large ribosomal subunit protein uL14 (122 aa).

This sequence belongs to the universal ribosomal protein uL14 family. As to quaternary structure, part of the 50S ribosomal subunit. Forms a cluster with proteins L3 and L19. In the 70S ribosome, L14 and L19 interact and together make contacts with the 16S rRNA in bridges B5 and B8.

Its function is as follows. Binds to 23S rRNA. Forms part of two intersubunit bridges in the 70S ribosome. The sequence is that of Large ribosomal subunit protein uL14 from Coxiella burnetii (strain RSA 331 / Henzerling II).